Here is a 207-residue protein sequence, read N- to C-terminus: ATP phosphoribosyltransferase (207 aa).

It belongs to the ATP phosphoribosyltransferase family. Short subfamily. As to quaternary structure, heteromultimer composed of HisG and HisZ subunits.

It localises to the cytoplasm. It carries out the reaction 1-(5-phospho-beta-D-ribosyl)-ATP + diphosphate = 5-phospho-alpha-D-ribose 1-diphosphate + ATP. It participates in amino-acid biosynthesis; L-histidine biosynthesis; L-histidine from 5-phospho-alpha-D-ribose 1-diphosphate: step 1/9. Catalyzes the condensation of ATP and 5-phosphoribose 1-diphosphate to form N'-(5'-phosphoribosyl)-ATP (PR-ATP). Has a crucial role in the pathway because the rate of histidine biosynthesis seems to be controlled primarily by regulation of HisG enzymatic activity. In Geobacillus kaustophilus (strain HTA426), this protein is ATP phosphoribosyltransferase.